The primary structure comprises 381 residues: Adaptive-response sensory kinase SasA (381 aa).

One can recognise a Histidine kinase domain in the interval Met-154–Asp-367. Residue His-157 is modified to Phosphohistidine; by autocatalysis.

As to quaternary structure, homooligomerizes. Interacts with KaiC. Participates in the KaiBC complex, whose core is composed of a KaiC homohexamer and 6 KaiB.

It catalyses the reaction ATP + protein L-histidine = ADP + protein N-phospho-L-histidine.. Member of the two-component regulatory system SasA/RpaA involved in genome-wide circadian gene expression. One of several clock output pathways. Participates in the Kai clock protein complex, the main circadian regulator in cyanobacteria, via its interaction with KaiC. KaiC enhances the autophosphorylation activity of SasA, which then transfers its phosphate group to RpaA to activate it. In addition to its output function, recruits fold-shifted KaiB (KaiB(fs)) to KaiC to cooperatively form the KaiB(6):KaiC(6) complex (independent of SasA kinase activity). Required for robustness of the circadian rhythm of gene expression and is involved in clock output, also required for adaptation to light/dark cycles. This chain is Adaptive-response sensory kinase SasA, found in Prochlorococcus marinus (strain SARG / CCMP1375 / SS120).